The primary structure comprises 91 residues: Small ribosomal subunit protein bS16 (91 aa).

The protein belongs to the bacterial ribosomal protein bS16 family.

In Limosilactobacillus fermentum (strain NBRC 3956 / LMG 18251) (Lactobacillus fermentum), this protein is Small ribosomal subunit protein bS16.